The sequence spans 752 residues: RNA-directed RNA polymerase catalytic subunit (752 aa).

2 consecutive short sequence motifs (nuclear localization signal) follow at residues 187 to 195 and 203 to 216; these read IKKKLPAKN and RIPMKVKDRITRVE. The tract at residues 249 to 256 is promoter-binding site; sequence RGFVLVVE. The region spanning 286–482 is the RdRp catalytic domain; the sequence is VAKMLSNCPP…GINMSKKKSY (197 aa).

The protein belongs to the influenza viruses polymerase PB1 family. Influenza RNA polymerase is composed of three subunits: PB1, PB2 and PA. Interacts (via N-terminus) with PA (via C-terminus). Interacts (via C-terminus) with PB2 (via N-terminus); this interaction is essential for transcription initiation. Post-translationally, phosphorylated by host PRKCA.

The protein resides in the host nucleus. It localises to the host cytoplasm. It carries out the reaction RNA(n) + a ribonucleoside 5'-triphosphate = RNA(n+1) + diphosphate. RNA-dependent RNA polymerase which is responsible for replication and transcription of virus RNA segments. The transcription of viral mRNAs occurs by a unique mechanism called cap-snatching. 5' methylated caps of cellular mRNAs are cleaved after 10-13 nucleotides by PA. In turn, these short capped RNAs are used as primers by PB1 for transcription of viral mRNAs. During virus replication, PB1 initiates RNA synthesis and copy vRNA into complementary RNA (cRNA) which in turn serves as a template for the production of more vRNAs. The protein is RNA-directed RNA polymerase catalytic subunit of Homo sapiens (Human).